We begin with the raw amino-acid sequence, 190 residues long: Glutathione peroxidase 2 (190 aa).

The active site involves Sec-40. A non-standard amino acid (selenocysteine) is located at residue Sec-40.

It belongs to the glutathione peroxidase family. Homotetramer.

Its subcellular location is the cytoplasm. The protein resides in the cytosol. It carries out the reaction 2 glutathione + H2O2 = glutathione disulfide + 2 H2O. It catalyses the reaction a hydroperoxy polyunsaturated fatty acid + 2 glutathione = a hydroxy polyunsaturated fatty acid + glutathione disulfide + H2O. The catalysed reaction is tert-butyl hydroperoxide + 2 glutathione = tert-butanol + glutathione disulfide + H2O. The enzyme catalyses cumene hydroperoxide + 2 glutathione = 2-phenylpropan-2-ol + glutathione disulfide + H2O. It carries out the reaction (13S)-hydroperoxy-(9Z,11E)-octadecadienoate + 2 glutathione = (13S)-hydroxy-(9Z,11E)-octadecadienoate + glutathione disulfide + H2O. It catalyses the reaction (5S)-hydroperoxy-(6E,8Z,11Z,14Z)-eicosatetraenoate + 2 glutathione = (5S)-hydroxy-(6E,8Z,11Z,14Z)-eicosatetraenoate + glutathione disulfide + H2O. The catalysed reaction is (12R)-hydroperoxy-(5Z,8Z,10E,14Z)-eicosatetraenoate + 2 glutathione = (12R)-hydroxy-(5Z,8Z,10E,14Z)-eicosatetraenoate + glutathione disulfide + H2O. The enzyme catalyses (15S)-hydroperoxy-(5Z,8Z,11Z,13E)-eicosatetraenoate + 2 glutathione = (15S)-hydroxy-(5Z,8Z,11Z,13E)-eicosatetraenoate + glutathione disulfide + H2O. Catalyzes the reduction of hydroperoxides in a glutathione-dependent manner thus regulating cellular redox homeostasis. Can reduce small soluble hydroperoxides such as H2O2, cumene hydroperoxide and tert-butyl hydroperoxide, as well as several fatty acid-derived hydroperoxides. Cannot reduce phosphatidycholine hydroperoxide. The protein is Glutathione peroxidase 2 (Gpx2) of Mus musculus (Mouse).